The primary structure comprises 253 residues: Phosphoglycerate mutase 2 (253 aa).

Phosphothreonine is present on T3. Residues 10–17 (RHGESLWN), 23–24 (CG), R62, 89–92 (ERHY), K100, and 116–117 (RR) each bind substrate. Residue H11 is the Tele-phosphohistidine intermediate of the active site. S14 carries the post-translational modification Phosphoserine. The active-site Proton donor/acceptor is E89. S118 is subject to Phosphoserine. At T121 the chain carries Phosphothreonine. Residues Y132 and Y133 each carry the phosphotyrosine modification. Residue S135 is modified to Phosphoserine. T152 bears the Phosphothreonine mark. 187 to 188 (GN) lines the substrate pocket.

This sequence belongs to the phosphoglycerate mutase family. BPG-dependent PGAM subfamily. In terms of assembly, homodimer. Interacts with ENO1. In terms of tissue distribution, expressed in the testes (at protein level).

The catalysed reaction is (2R)-2-phosphoglycerate = (2R)-3-phosphoglycerate. The enzyme catalyses (2R)-3-phospho-glyceroyl phosphate = (2R)-2,3-bisphosphoglycerate + H(+). Its function is as follows. Interconversion of 3- and 2-phosphoglycerate with 2,3-bisphosphoglycerate as the primer of the reaction. Can also catalyze the reaction of EC 5.4.2.4 (synthase), but with a reduced activity. The chain is Phosphoglycerate mutase 2 (Pgam2) from Mus musculus (Mouse).